A 347-amino-acid chain; its full sequence is NAD-dependent alcohol dehydrogenase (347 aa).

At lysine 11 the chain carries N6-methyllysine; partial. The Zn(2+) site is built by cysteine 38, histidine 68, glutamate 98, cysteine 101, cysteine 104, cysteine 112, and cysteine 154. An N6-methyllysine; partial modification is found at lysine 213.

It belongs to the zinc-containing alcohol dehydrogenase family. In terms of assembly, homodimer and homotetramer. Zn(2+) serves as cofactor.

The enzyme catalyses a primary alcohol + NAD(+) = an aldehyde + NADH + H(+). The catalysed reaction is a secondary alcohol + NAD(+) = a ketone + NADH + H(+). This is NAD-dependent alcohol dehydrogenase (adh) from Saccharolobus solfataricus (strain ATCC 35092 / DSM 1617 / JCM 11322 / P2) (Sulfolobus solfataricus).